Consider the following 106-residue polypeptide: MNSAVKYPELKIKLESYDSTLLDLTIKKIVEVVKGVNIKIKGPLPLPTKKEVITIIRSPHVDKASREQFEKNTHKRLMILVDVNQGGIDSLKKIKIPVGVTLRFSK.

Belongs to the universal ribosomal protein uS10 family. In terms of assembly, part of the 30S ribosomal subunit.

Functionally, involved in the binding of tRNA to the ribosomes. This Mycoplasma genitalium (strain ATCC 33530 / DSM 19775 / NCTC 10195 / G37) (Mycoplasmoides genitalium) protein is Small ribosomal subunit protein uS10.